Here is a 130-residue protein sequence, read N- to C-terminus: 3-aminoacrylate deaminase RutC (130 aa).

The protein belongs to the RutC family.

The catalysed reaction is (Z)-3-aminoacrylate + H2O + H(+) = 3-oxopropanoate + NH4(+). Its function is as follows. Involved in pyrimidine catabolism. Catalyzes the deamination of 3-aminoacrylate to malonic semialdehyde, a reaction that can also occur spontaneously. RutC may facilitate the reaction and modulate the metabolic fitness, rather than catalyzing essential functions. In Klebsiella pneumoniae (strain 342), this protein is 3-aminoacrylate deaminase RutC.